The following is a 260-amino-acid chain: Cytosolic Fe-S cluster assembly factor Nubp2 homolog 1 (260 aa).

14-21 (GKGGVGKS) contributes to the ATP binding site. [4Fe-4S] cluster is bound by residues Cys188 and Cys191.

The protein belongs to the Mrp/NBP35 ATP-binding proteins family. NUBP2/CFD1 subfamily. In terms of assembly, heterotetramer of 2 Nubp1 and 2 Nubp2 chains. Requires [4Fe-4S] cluster as cofactor.

The protein localises to the cytoplasm. Functionally, component of the cytosolic iron-sulfur (Fe/S) protein assembly (CIA) machinery. Required for maturation of extramitochondrial Fe-S proteins. The Nubp1-Nubp2 heterotetramer forms a Fe-S scaffold complex, mediating the de novo assembly of an Fe-S cluster and its transfer to target apoproteins. This chain is Cytosolic Fe-S cluster assembly factor Nubp2 homolog 1, found in Drosophila yakuba (Fruit fly).